The primary structure comprises 323 residues: Glutamyl-Q tRNA(Asp) synthetase (323 aa).

Residues 5–9 and glutamate 41 contribute to the L-glutamate site; that span reads RFAPT. A 'HIGH' region motif is present at residues 8–18; it reads PTPSGALHLGN. Residues cysteine 105, cysteine 107, tyrosine 129, and cysteine 133 each coordinate Zn(2+). 2 residues coordinate L-glutamate: tyrosine 193 and arginine 211. A 'KMSKS' region motif is present at residues 249–253; the sequence is RLAKR. ATP is bound at residue lysine 252.

Belongs to the class-I aminoacyl-tRNA synthetase family. GluQ subfamily. Zn(2+) is required as a cofactor.

Catalyzes the tRNA-independent activation of glutamate in presence of ATP and the subsequent transfer of glutamate onto a tRNA(Asp). Glutamate is transferred on the 2-amino-5-(4,5-dihydroxy-2-cyclopenten-1-yl) moiety of the queuosine in the wobble position of the QUC anticodon. The protein is Glutamyl-Q tRNA(Asp) synthetase of Symbiobacterium thermophilum (strain DSM 24528 / JCM 14929 / IAM 14863 / T).